A 770-amino-acid chain; its full sequence is U3 small nucleolar RNA-associated protein 14 homolog A (770 aa).

A compositionally biased stretch (polar residues) spans 1-17 (MNANQAAESNLLASNQQ). The interval 1–65 (MNANQAAESN…GKDRQKLADR (65 aa)) is disordered. Residues S30, S32, and S53 each carry the phosphoserine modification. Residues 41–68 (ERKHQKLLESISSLNGKDRQKLADRSEA) adopt a coiled-coil conformation. Residues 56–65 (GKDRQKLADR) show a composition bias toward basic and acidic residues. Phosphoserine occurs at positions 78 and 82. T206 carries the post-translational modification Phosphothreonine. Coiled-coil stretches lie at residues 217 to 291 (SLEE…DKAR) and 318 to 348 (LEAR…EEEG). 3 disordered regions span residues 334–361 (LTQK…LVPD), 392–455 (KDLE…SSQE), and 467–505 (LRTE…RPER). Acidic residues-rich tracts occupy residues 343-358 (ESEE…EEPL) and 396-410 (DPAE…ESEE). Phosphoserine occurs at positions 406 and 408. Over residues 411–444 (EKAVVEEETLLKEFEERRSLRQKSELNHMAEPVH) the composition is skewed to basic and acidic residues. Residue K449 forms a Glycyl lysine isopeptide (Lys-Gly) (interchain with G-Cter in SUMO2) linkage. A Phosphoserine modification is found at S453. Residue S567 is modified to Phosphoserine. R588 bears the Citrulline mark. A Glycyl lysine isopeptide (Lys-Gly) (interchain with G-Cter in SUMO2) cross-link involves residue K732.

It belongs to the UTP14 family. As to quaternary structure, interacts with DHX37. Post-translationally, citrullinated by PADI4.

The protein localises to the nucleus. Its subcellular location is the nucleolus. Functionally, may be required for ribosome biogenesis. The polypeptide is U3 small nucleolar RNA-associated protein 14 homolog A (UTP14A) (Bos taurus (Bovine)).